The following is a 519-amino-acid chain: Probable anion transporter 3, chloroplastic (519 aa).

The transit peptide at 1–76 (MAPPGQLLPL…PPPPATSLPG (76 aa)) directs the protein to the chloroplast. Pro residues predominate over residues 56 to 72 (LPFAPPRRLSRPPPPAT). The disordered stretch occupies residues 56–82 (LPFAPPRRLSRPPPPATSLPGASPGGG). 12 helical membrane-spanning segments follow: residues 100–120 (VAAMLGLALALCNADRVVMSV), 138–158 (VVQSSFLWGYLVSPIIGGALV), 166–186 (VMAYGVALWSLATFLSPWAAA), 188–208 (SLWLFLSTRVLLGMAEGVALP), 229–249 (IAMAGFQLGNTIGLLLSPIIM), 253–273 (GIFGPFVIFGLFGFLWVLVWI), 326–346 (WALISANAMHSWGYFVILSWM), 362–382 (AWFSALPWVMMAVLGYVAGVV), 403–423 (IGFVGPGVALLGLNAAKSPVI), 424–444 (ASAWLTIAVGLKSFGHSGFLV), 460–480 (MSNTAGTFAAILGTVGAGFFV), and 488–508 (GFLILTSLLYFSSTLFWDIFA).

The protein belongs to the major facilitator superfamily. Sodium/anion cotransporter (TC 2.A.1.14) family.

The protein localises to the plastid. It is found in the chloroplast membrane. Functionally, probable anion transporter. In Oryza sativa subsp. japonica (Rice), this protein is Probable anion transporter 3, chloroplastic (PHT4;3).